A 271-amino-acid chain; its full sequence is Shikimate dehydrogenase (NADP(+)) (271 aa).

Shikimate contacts are provided by residues 14 to 16 (SRS) and Thr-61. Lys-65 acts as the Proton acceptor in catalysis. The shikimate site is built by Asn-86 and Asp-102. NADP(+)-binding positions include 126-130 (GAGGA), 149-154 (NRTFSR), and Met-213. Position 215 (Tyr-215) interacts with shikimate. Position 238 (Gly-238) interacts with NADP(+).

It belongs to the shikimate dehydrogenase family. Homodimer.

The enzyme catalyses shikimate + NADP(+) = 3-dehydroshikimate + NADPH + H(+). Its pathway is metabolic intermediate biosynthesis; chorismate biosynthesis; chorismate from D-erythrose 4-phosphate and phosphoenolpyruvate: step 4/7. In terms of biological role, involved in the biosynthesis of the chorismate, which leads to the biosynthesis of aromatic amino acids. Catalyzes the reversible NADPH linked reduction of 3-dehydroshikimate (DHSA) to yield shikimate (SA). The chain is Shikimate dehydrogenase (NADP(+)) from Histophilus somni (strain 129Pt) (Haemophilus somnus).